Here is a 226-residue protein sequence, read N- to C-terminus: Lipid phosphate phosphatase gamma (226 aa).

The residue at position 1 (M1) is an N-acetylmethionine. 5 helical membrane-spanning segments follow: residues 24–44, 52–72, 102–122, 128–148, and 152–174; these read LGHF…GGFV, ELQG…NEFI, FMFF…GFWF, WIMN…RVYL, and TVAQ…FWVV.

This sequence belongs to the PA-phosphatase related phosphoesterase family. As to expression, expressed in root tips, root branch points, vascular tissue of cotyledons and leaves, pistil, anthers and filaments.

Its subcellular location is the plastid. It is found in the chloroplast inner membrane. Its activity is regulated as follows. Inhibited by Mg(2+). Functionally, exhibits phosphatidate phosphatase (PAP) activity in vitro. May play a primary role as PAP in plastids. This chain is Lipid phosphate phosphatase gamma (LPPG), found in Arabidopsis thaliana (Mouse-ear cress).